A 705-amino-acid polypeptide reads, in one-letter code: Lethal(3)malignant brain tumor-like protein 2 (705 aa).

Residues 1–84 (MEKPRSIEET…GTPRSLDGSG (84 aa)) form a disordered region. Ser13 carries the phosphoserine modification. The span at 15–25 (PMEEEEDDDLE) shows a compositional bias: acidic residues. The span at 38–49 (SSVGSESSSYLE) shows a compositional bias: low complexity. Positions 50–60 (ESSEAENEDRE) are enriched in acidic residues. Ser67 carries the post-translational modification Phosphoserine. Position 76 is a phosphothreonine (Thr76). The FCS-type zinc-finger motif lies at 81–116 (DGSGSEPAVCEMCGIVGTREAFFSKTKRFCSVSCSR). The Zn(2+) site is built by Cys90, Cys93, Cys110, and Cys114. MBT repeat units follow at residues 179-283 (FDWG…LVPP), 291-391 (TDWK…IKMS), 397-500 (MAHH…LTPP), and 508-604 (FNWE…LQPP). Position 338 is a phosphoserine (Ser338). Residue Lys405 forms a Glycyl lysine isopeptide (Lys-Gly) (interchain with G-Cter in SUMO2) linkage. The disordered stretch occupies residues 608-665 (EPATPLKAKEATKKKKKQFGKKRKRIPPTKTRPLRQGSKKPLLEDDPQGARKISSEPV). The segment covering 619–634 (TKKKKKQFGKKRKRIP) has biased composition (basic residues). Residues Lys647, Lys659, and Lys675 each participate in a glycyl lysine isopeptide (Lys-Gly) (interchain with G-Cter in SUMO2) cross-link. The interval 680–705 (DVASPDKASSPELPVSVENIKQETDD) is disordered. Ser683, Ser688, and Ser689 each carry phosphoserine. Lys700 participates in a covalent cross-link: Glycyl lysine isopeptide (Lys-Gly) (interchain with G-Cter in SUMO1); alternate. Residue Lys700 forms a Glycyl lysine isopeptide (Lys-Gly) (interchain with G-Cter in SUMO2); alternate linkage.

Part of the E2F6.com-1 complex in G0 phase composed of E2F6, MGA, MAX, TFDP1, CBX3, BAT8, EUHMTASE1, RING1, RNF2, MBLR, BAT8 and YAF2.

The protein resides in the nucleus. In terms of biological role, putative Polycomb group (PcG) protein. PcG proteins maintain the transcriptionally repressive state of genes, probably via a modification of chromatin, rendering it heritably changed in its expressibility. Its association with a chromatin-remodeling complex suggests that it may contribute to prevent expression of genes that trigger the cell into mitosis. Binds to monomethylated and dimethylated 'Lys-20' on histone H4. Binds histone H3 peptides that are monomethylated or dimethylated on 'Lys-4', 'Lys-9' or 'Lys-27'. This Homo sapiens (Human) protein is Lethal(3)malignant brain tumor-like protein 2 (L3MBTL2).